A 325-amino-acid chain; its full sequence is Elongation factor P--(R)-beta-lysine ligase (325 aa).

Residue 76 to 78 participates in substrate binding; the sequence is SPE. Residues 100–102 and asparagine 109 contribute to the ATP site; that span reads RNE. A substrate-binding site is contributed by tyrosine 118. 244–245 provides a ligand contact to ATP; the sequence is EL. A substrate-binding site is contributed by glutamate 251. Glycine 300 provides a ligand contact to ATP.

This sequence belongs to the class-II aminoacyl-tRNA synthetase family. EpmA subfamily. In terms of assembly, homodimer.

It carries out the reaction D-beta-lysine + L-lysyl-[protein] + ATP = N(6)-((3R)-3,6-diaminohexanoyl)-L-lysyl-[protein] + AMP + diphosphate + H(+). With EpmB is involved in the beta-lysylation step of the post-translational modification of translation elongation factor P (EF-P). Catalyzes the ATP-dependent activation of (R)-beta-lysine produced by EpmB, forming a lysyl-adenylate, from which the beta-lysyl moiety is then transferred to the epsilon-amino group of a conserved specific lysine residue in EF-P. The protein is Elongation factor P--(R)-beta-lysine ligase of Klebsiella pneumoniae (strain 342).